The following is a 92-amino-acid chain: UPF0250 protein Rmag_0541 (92 aa).

It belongs to the UPF0250 family.

The protein is UPF0250 protein Rmag_0541 of Ruthia magnifica subsp. Calyptogena magnifica.